Reading from the N-terminus, the 184-residue chain is ATP synthase subunit b, chloroplastic (184 aa).

Residues 27-49 (FATNPINLSVVLGVLIFFGKGVL) form a helical membrane-spanning segment.

It belongs to the ATPase B chain family. As to quaternary structure, F-type ATPases have 2 components, F(1) - the catalytic core - and F(0) - the membrane proton channel. F(1) has five subunits: alpha(3), beta(3), gamma(1), delta(1), epsilon(1). F(0) has four main subunits: a(1), b(1), b'(1) and c(10-14). The alpha and beta chains form an alternating ring which encloses part of the gamma chain. F(1) is attached to F(0) by a central stalk formed by the gamma and epsilon chains, while a peripheral stalk is formed by the delta, b and b' chains.

The protein localises to the plastid. It is found in the chloroplast thylakoid membrane. In terms of biological role, f(1)F(0) ATP synthase produces ATP from ADP in the presence of a proton or sodium gradient. F-type ATPases consist of two structural domains, F(1) containing the extramembraneous catalytic core and F(0) containing the membrane proton channel, linked together by a central stalk and a peripheral stalk. During catalysis, ATP synthesis in the catalytic domain of F(1) is coupled via a rotary mechanism of the central stalk subunits to proton translocation. Functionally, component of the F(0) channel, it forms part of the peripheral stalk, linking F(1) to F(0). The chain is ATP synthase subunit b, chloroplastic from Amborella trichopoda.